Reading from the N-terminus, the 1389-residue chain is Superkiller protein 3 (1389 aa).

TPR repeat units lie at residues 2 to 35 (AKPA…DANN), 36 to 69 (YNAN…DEKA), and 90 to 123 (HKIT…VKKY). Positions 326–355 (SNNSAELAKETKEEDDSENSVDKKENEEDI) are disordered. 15 TPR repeats span residues 381 to 414 (TIIS…LKRL), 429 to 463 (FQLC…DPRN), 465 to 497 (HALL…HEND), 498 to 530 (PSLS…LLSM), 538 to 574 (AEAY…DPNY), 575 to 608 (APAY…DASQ), 650 to 683 (NWHH…SPKD), 684 to 717 (TNAW…DPDD), 719 to 751 (YVKY…RSKE), 759 to 792 (AETY…CCNV), 931 to 963 (VFWN…NERS), 964 to 997 (SGVW…DPDN), 999 to 1031 (QAWL…SSGK), 1124 to 1157 (IDAK…LEGE), and 1167 to 1200 (LGLN…SDSN).

Component of the SKI complex composed of at least ski2, ski3 and ski8. The SKI complex interacts with ski7, which makes the link between the SKI complex and the exosome in order to perform mRNA degradation.

The protein localises to the cytoplasm. Its function is as follows. Component of the SKI complex involved in 3'-mRNA degradation pathway. The sequence is that of Superkiller protein 3 (ski3) from Schizosaccharomyces pombe (strain 972 / ATCC 24843) (Fission yeast).